Consider the following 348-residue polypeptide: Fasciculation and elongation protein zeta-2 (348 aa).

The tract at residues 11 to 40 is disordered; the sequence is YEFQEPAGSVQEQENCNASPEAGAGAHAGG. Phosphoserine occurs at positions 130, 171, and 190. Residues 206–280 are a coiled coil; that stretch reads ERVKRLSVSE…TAKKKKKLKS (75 aa). The disordered stretch occupies residues 265 to 296; that stretch reads QKEHKETAKKKKKLKSGSSQNGRSERSHMPGT.

This sequence belongs to the zygin family. In terms of assembly, homodimer; disulfide-linked. May form heterodimers with FEZ1. Interacts with synaptotagmin.

In terms of biological role, involved in axonal outgrowth and fasciculation. The protein is Fasciculation and elongation protein zeta-2 (Fez2) of Mus musculus (Mouse).